The primary structure comprises 498 residues: UDP-N-acetylmuramate--L-alanine ligase (498 aa).

An ATP-binding site is contributed by 120–126 (GSHGKTT).

Belongs to the MurCDEF family.

It localises to the cytoplasm. It carries out the reaction UDP-N-acetyl-alpha-D-muramate + L-alanine + ATP = UDP-N-acetyl-alpha-D-muramoyl-L-alanine + ADP + phosphate + H(+). Its pathway is cell wall biogenesis; peptidoglycan biosynthesis. Functionally, cell wall formation. In Rickettsia typhi (strain ATCC VR-144 / Wilmington), this protein is UDP-N-acetylmuramate--L-alanine ligase.